We begin with the raw amino-acid sequence, 752 residues long: Pre-mRNA-processing factor 39 (752 aa).

Positions 1-148 (MEDSGESMTG…DPAAPQEPEL (148 aa)) are disordered. Residues 28–42 (TTGTDDVTGLSTSDL) show a composition bias toward polar residues. Low complexity-rich tracts occupy residues 43-56 (TTEQ…QTQP), 76-94 (QSAS…PPES), and 133-148 (EPAA…EPEL). 3 HAT repeats span residues 180 to 212 (NHLL…IERK), 214 to 246 (GYIQ…FLRE), and 254 to 289 (EAES…WETE). Residues 347 to 374 (NKPSGDEDAETEAPGEELPPGTEDLPDP) are disordered. Acidic residues predominate over residues 352–361 (DEDAETEAPG). HAT repeat units follow at residues 408-440 (AFEE…FELE) and 442-474 (GTPE…YLES). Basic and acidic residues predominate over residues 678 to 699 (SFKRKAENGSEEPDAKRQRTDD). Residues 678-703 (SFKRKAENGSEEPDAKRQRTDDQSVA) form a disordered region. An HAT 6 repeat occupies 700 to 731 (QSVASGQMMDMQANHAGYNYNNWYQYNSWGSQ).

Belongs to the PRP39 family.

It localises to the nucleus. Its function is as follows. Involved in pre-mRNA splicing. The protein is Pre-mRNA-processing factor 39 (prpf39) of Danio rerio (Zebrafish).